A 183-amino-acid chain; its full sequence is MTDQTYCDRLVQDTPFLTGQGRLSEQQVDRIILQLNRYYPQILTNKEAEKFRNPKASLRVRLCDLLSHLQQRGERHCQEFYRALYIHAQPLHSHLPSRYSPQNSDCRELDWGIESRELSDRGPMSFLAGLGLAAGLALLLYCCPPDPKVLPGTRRVLAFSPVIIDRHVSRYLLAFLADDLGGL.

The cysteines at positions 7 and 77 are disulfide-linked. The CARD domain maps to 8 to 99 (DRLVQDTPFL…PLHSHLPSRY (92 aa)). Residues 122 to 142 (GPMSFLAGLGLAAGLALLLYC) traverse the membrane as a helical segment.

As to quaternary structure, associates with BCL10 by CARD-CARD interaction.

Its subcellular location is the endoplasmic reticulum membrane. It is found in the mitochondrion membrane. Functionally, plays a role in inhibiting the effects of BCL10-induced activation of NF-kappa-B. This chain is Caspase recruitment domain-containing protein 19, found in Mus musculus (Mouse).